The sequence spans 439 residues: Perilipin-3 (439 aa).

Positions 1 to 19 (MFASETEASASSTQVTTEE) are enriched in low complexity. Residues 1–26 (MFASETEASASSTQVTTEEPVQQPSV) form a disordered region. Lys66 carries the post-translational modification N6-acetyllysine. A Phosphoserine modification is found at Ser92. Residue Lys123 forms a Glycyl lysine isopeptide (Lys-Gly) (interchain with G-Cter in SUMO1) linkage. Residue Ser131 is modified to Phosphoserine. A Phosphothreonine modification is found at Thr175. Phosphoserine is present on residues Ser180 and Ser184. Residue Thr221 is modified to Phosphothreonine. Ser222 and Ser246 each carry phosphoserine. Coiled coils occupy residues 254–282 (RAYE…QALS) and 358–381 (AHVK…FSGM). Tyr256 is modified (phosphotyrosine).

This sequence belongs to the perilipin family. As to quaternary structure, homooligomer. Interacts with M6PR (via the cytoplasmic domain). Interacts with IGF2R (via the cytoplasmic domain). Post-translationally, phosphorylation at Tyr-256 by isoform 1 of CHKA (CHKalpha2) promotes dissociation from lipid droplets: dissociation is followed by recruitment of autophagosome machinery to lipid droplets and subsequent lipid droplet lipolysis.

It is found in the lipid droplet. Its subcellular location is the endosome membrane. The protein resides in the cytoplasm. Structural component of lipid droplets, which is required for the formation and maintenance of lipid storage droplets. Required for the transport of mannose 6-phosphate receptors (MPR) from endosomes to the trans-Golgi network. The polypeptide is Perilipin-3 (PLIN3) (Sus scrofa (Pig)).